We begin with the raw amino-acid sequence, 193 residues long: Peptide deformylase (193 aa).

Positions 111 and 155 each coordinate Fe cation. Residue E156 is part of the active site. H159 contributes to the Fe cation binding site.

This sequence belongs to the polypeptide deformylase family. Fe(2+) serves as cofactor.

The enzyme catalyses N-terminal N-formyl-L-methionyl-[peptide] + H2O = N-terminal L-methionyl-[peptide] + formate. Its function is as follows. Removes the formyl group from the N-terminal Met of newly synthesized proteins. Requires at least a dipeptide for an efficient rate of reaction. N-terminal L-methionine is a prerequisite for activity but the enzyme has broad specificity at other positions. This Mycoplasma genitalium (strain ATCC 33530 / DSM 19775 / NCTC 10195 / G37) (Mycoplasmoides genitalium) protein is Peptide deformylase.